We begin with the raw amino-acid sequence, 149 residues long: Low molecular weight protein-tyrosine-phosphatase Wzb (149 aa).

Residue C9 is the Nucleophile of the active site. The active site involves R15. D115 (proton donor) is an active-site residue.

The protein belongs to the low molecular weight phosphotyrosine protein phosphatase family.

It catalyses the reaction O-phospho-L-tyrosyl-[protein] + H2O = L-tyrosyl-[protein] + phosphate. It participates in glycan metabolism; exopolysaccharide biosynthesis. Functionally, dephosphorylates Wzc. Required for the extracellular polysaccharide colanic acid synthesis. Probably involved in the export of colanic acid from the cell to medium. Involved in protection of cells against contact-dependent growth inhibition (CDI). The protein is Low molecular weight protein-tyrosine-phosphatase Wzb (wzb) of Salmonella typhimurium (strain LT2 / SGSC1412 / ATCC 700720).